Here is a 321-residue protein sequence, read N- to C-terminus: Diguanylate cyclase (321 aa).

The PAS domain maps to 28-98 (QFSLHELVLN…AADQQVFETR (71 aa)). The region spanning 102–155 (VHEERAIAKSNGLVRIYRAVKHPILHRVTGEVIGLIGVSTDITDIVELREQLYQ) is the PAC domain. In terms of domain architecture, GGDEF spans 187 to 318 (QPLSCISIDI…GRNRCCIYRQ (132 aa)). Residues aspartate 195, isoleucine 196, and glutamate 238 each coordinate Mg(2+). The Proton acceptor role is filled by glutamate 238.

Mg(2+) is required as a cofactor.

The catalysed reaction is 2 GTP = 3',3'-c-di-GMP + 2 diphosphate. Functionally, involved in biofilm formation. Catalyzes the conversion of GTP to c-di-GMP. The chain is Diguanylate cyclase from Vibrio cholerae serotype O1 (strain ATCC 39541 / Classical Ogawa 395 / O395).